We begin with the raw amino-acid sequence, 528 residues long: Phosphoenolpyruvate carboxykinase (ATP) (528 aa).

The substrate site is built by Arg-56, Tyr-192, and Lys-198. Residues Lys-198, His-217, and 233 to 241 contribute to the ATP site; that span reads GLSGTGKTT. Residues Lys-198 and His-217 each coordinate Mn(2+). Asp-254 is a binding site for Mn(2+). Residues Glu-282, Arg-319, and Thr-444 each coordinate ATP. Arg-319 contributes to the substrate binding site.

It belongs to the phosphoenolpyruvate carboxykinase (ATP) family. Requires Mn(2+) as cofactor.

It is found in the cytoplasm. The enzyme catalyses oxaloacetate + ATP = phosphoenolpyruvate + ADP + CO2. The protein operates within carbohydrate biosynthesis; gluconeogenesis. In terms of biological role, involved in the gluconeogenesis. Catalyzes the conversion of oxaloacetate (OAA) to phosphoenolpyruvate (PEP) through direct phosphoryl transfer between the nucleoside triphosphate and OAA. This is Phosphoenolpyruvate carboxykinase (ATP) from Bacillus cereus (strain AH187).